Here is a 229-residue protein sequence, read N- to C-terminus: Adenylate kinase 1 (229 aa).

ATP is bound at residue 42–47; that stretch reads GCGKGT. Position 62 is a phosphoserine (Ser62). AMP is bound by residues Ser63, Arg68, 118–121, and Gln125; that span reads GYPR. ATP is bound at residue Arg156. AMP contacts are provided by Arg164 and Arg175.

The protein belongs to the adenylate kinase family. AK1 subfamily. In terms of tissue distribution, high expression levels in the thorax, suggesting a possible function in the gastrointestinal or reproductive systems.

Its subcellular location is the cytoplasm. The enzyme catalyses AMP + ATP = 2 ADP. Its function is as follows. Catalyzes the reversible transfer of the terminal phosphate group between ATP and AMP. Plays an important role in cellular energy homeostasis and in adenine nucleotide metabolism. The protein is Adenylate kinase 1 of Drosophila melanogaster (Fruit fly).